The chain runs to 341 residues: Malate dehydrogenase, mitochondrial (341 aa).

NAD(+) contacts are provided by residues 35–41 (GAAGGIG) and aspartate 61. Substrate contacts are provided by arginine 108 and arginine 114. NAD(+) contacts are provided by residues asparagine 121 and 144 to 146 (ITN). 2 residues coordinate substrate: asparagine 146 and arginine 180. Catalysis depends on histidine 204, which acts as the Proton acceptor. Methionine 255 contacts NAD(+).

This sequence belongs to the LDH/MDH superfamily. MDH type 1 family. As to quaternary structure, homodimer.

It is found in the mitochondrion matrix. It carries out the reaction (S)-malate + NAD(+) = oxaloacetate + NADH + H(+). Its function is as follows. Catalyzes the reversible conversion of (S)-malate to oxaloacetate in the citric acid cycle. The polypeptide is Malate dehydrogenase, mitochondrial (Caenorhabditis elegans).